The chain runs to 420 residues: Glutamate-1-semialdehyde 2,1-aminomutase (420 aa).

Lys-261 is subject to N6-(pyridoxal phosphate)lysine.

Belongs to the class-III pyridoxal-phosphate-dependent aminotransferase family. HemL subfamily. Pyridoxal 5'-phosphate serves as cofactor.

Its subcellular location is the cytoplasm. The enzyme catalyses (S)-4-amino-5-oxopentanoate = 5-aminolevulinate. It functions in the pathway porphyrin-containing compound metabolism; protoporphyrin-IX biosynthesis; 5-aminolevulinate from L-glutamyl-tRNA(Glu): step 2/2. In Thermoplasma volcanium (strain ATCC 51530 / DSM 4299 / JCM 9571 / NBRC 15438 / GSS1), this protein is Glutamate-1-semialdehyde 2,1-aminomutase.